Here is a 158-residue protein sequence, read N- to C-terminus: Small ribosomal subunit protein uS19 (158 aa).

It belongs to the universal ribosomal protein uS19 family.

Functionally, protein S19 forms a complex with S13 that binds strongly to the 16S ribosomal RNA. This chain is Small ribosomal subunit protein uS19, found in Pyrobaculum calidifontis (strain DSM 21063 / JCM 11548 / VA1).